The primary structure comprises 150 residues: UPF0756 membrane protein plu2726 (150 aa).

4 consecutive transmembrane segments (helical) span residues 8-28, 51-71, 88-108, and 123-143; these read LLVL…TVTL, YGLT…IASG, LLAI…VSLM, and VLGV…AGIL.

Belongs to the UPF0756 family.

The protein resides in the cell membrane. This is UPF0756 membrane protein plu2726 from Photorhabdus laumondii subsp. laumondii (strain DSM 15139 / CIP 105565 / TT01) (Photorhabdus luminescens subsp. laumondii).